Consider the following 103-residue polypeptide: MIILKDGYKEFADCMYYFLHYYIGYGRYTYSATNGSCDKGEYLDKRHNQCCNRCPPGEFAKVRCNGNDNTKCERCPPHTYTTIPIILMDVINVENAQQDHLIR.

A TNFR-Cys 1 repeat occupies 36–73 (SCDKGEYLDKRHNQCCNRCPPGEFAKVRCNGNDNTKCE). Cystine bridges form between Cys-37–Cys-50, Cys-51–Cys-64, and Cys-54–Cys-72. One copy of the TNFR-Cys 2; truncated repeat lies at 74–103 (RCPPHTYTTIPIILMDVINVENAQQDHLIR).

Belongs to the poxviridae A53R protein family.

This is Truncated secreted TNF-receptor-like protein A53 from Vaccinia virus (strain Copenhagen) (VACV).